Reading from the N-terminus, the 541-residue chain is Multidrug transporter protein MdtP (541 aa).

14 helical membrane passes run 14-34 (LLIT…TIVG), 40-60 (IVGD…YLLT), 79-99 (IVYV…GMAN), 112-132 (GIGG…LFTG), 141-161 (VFGA…GWIV), 168-188 (WVFY…ARGL), 201-221 (IAGI…LSFG), 229-249 (SWQI…FIIV), 273-293 (LIGF…PFFM), 307-327 (IMTP…QLVY), 329-349 (IGIK…FLLL), 359-379 (LVAT…MPIL), 401-420 (FFRS…VMNA), and 492-512 (LHSV…FTLF).

The protein belongs to the major facilitator superfamily. EmrB family.

Its subcellular location is the cell membrane. Its function is as follows. Multidrug efflux transporter. Contributes to resistance to several antibiotics, including fusidic acid, novobiocin, streptomycin and actinomycin, possibly by pumping these structurally unrelated antibiotics out of cells. In Bacillus subtilis (strain 168), this protein is Multidrug transporter protein MdtP.